The primary structure comprises 563 residues: Arginine--tRNA ligase (563 aa).

Positions 122 to 132 (PNIAKPMSMGH) match the 'HIGH' region motif.

This sequence belongs to the class-I aminoacyl-tRNA synthetase family. As to quaternary structure, monomer.

It is found in the cytoplasm. It carries out the reaction tRNA(Arg) + L-arginine + ATP = L-arginyl-tRNA(Arg) + AMP + diphosphate. This is Arginine--tRNA ligase from Ligilactobacillus salivarius (strain UCC118) (Lactobacillus salivarius).